We begin with the raw amino-acid sequence, 676 residues long: Electrogenic aspartate/glutamate antiporter SLC25A13, mitochondrial (676 aa).

At Ala2 the chain carries N-acetylalanine. Residues 2 to 295 form a regulatory N-terminal domain region; the sequence is AAAKVALTKR…TLADIERIAP (294 aa). Topologically, residues 2–332 are mitochondrial intermembrane; it reads AAAKVALTKR…LLQLAESAYR (331 aa). EF-hand domains lie at 51–86, 87–122, 125–157, and 158–193; these read SQPNPKTVELLSGVVDQTKDGLISFQEFVAFESVLC, APDALFMVAFQLFDKAGKGEVTFEDVRQVFGQTTIH, IPFNWDSEFVQLHFGKERKRHLTYAEFTQFLLE, and IQLEHAKQAFVQRDNAKTGKVTAIDFRDIMVTIRPH. Ca(2+) is bound by residues Asp66, Thr68, Asp70, Leu72, and Glu77. The interval 296 to 312 is linker loop domain; it reads LEEGMLPFNLAEAQRQQ. The segment at 322–613 is carrier domain; the sequence is FLLQLAESAY…LQRWFYVDFG (292 aa). Solcar repeat units follow at residues 327–419, 427–511, and 519–607; these read AESA…VRDK, VPLL…VKAS, and VSPG…LQRW. A helical membrane pass occupies residues 333–350; that stretch reads FGLGSIAGAVGATAVYPI. Over 351–393 the chain is Mitochondrial matrix; it reads DLVKTRMQNQRSTGSFVGELMYKNSFDCFKKVLRYEGFFGLYR. Lys354 and Lys373 each carry N6-acetyllysine. Residues 394 to 413 traverse the membrane as a helical segment; that stretch reads GLLPQLLGVAPEKAIKLTVN. The Mitochondrial intermembrane segment spans residues 414 to 436; the sequence is DFVRDKFMHKDGSVPLLAEIFAG. The chain crosses the membrane as a helical span at residues 437–450; sequence GCAGGSQVIFTNPL. Over 451 to 485 the chain is Mitochondrial matrix; the sequence is EIVKIRLQVAGEITTGPRVSALSVVRDLGFFGIYK. N6-methyllysine is present on Lys454. N6-acetyllysine; alternate is present on Lys485. Lys485 is modified (N6-succinyllysine; alternate). A helical membrane pass occupies residues 486-505; the sequence is GAKACFLRDIPFSAIYFPCY. Residues 506–524 are Mitochondrial intermembrane-facing; the sequence is AHVKASFANEDGQVSPGSL. A helical membrane pass occupies residues 525 to 542; the sequence is LLAGAIAGMPAASLVTPA. At 543–581 the chain is on the mitochondrial matrix side; the sequence is DVIKTRLQVAARAGQTTYSGVTDCFRKILREEGPKALWK. Lys581 is subject to N6-succinyllysine. Residues 582 to 601 form a helical membrane-spanning segment; that stretch reads GAGARVFRSSPQFGVTLLTY. Topologically, residues 602-676 are mitochondrial intermembrane; it reads ELLQRWFYVD…STSKVTAVGS (75 aa). The interval 614-676 is C-terminal domain; sequence GVKPVGSELV…STSKVTAVGS (63 aa). Residue Lys663 is modified to N6-acetyllysine. Residue Ser667 is modified to Phosphoserine.

The protein belongs to the mitochondrial carrier (TC 2.A.29) family. Homodimer (via N-terminus).

Its subcellular location is the mitochondrion inner membrane. The enzyme catalyses L-aspartate(in) + L-glutamate(out) + H(+)(out) = L-aspartate(out) + L-glutamate(in) + H(+)(in). The catalysed reaction is 3-sulfino-L-alanine(out) + L-glutamate(in) + H(+)(in) = 3-sulfino-L-alanine(in) + L-glutamate(out) + H(+)(out). It catalyses the reaction 3-sulfino-L-alanine(out) + L-aspartate(in) = 3-sulfino-L-alanine(in) + L-aspartate(out). With respect to regulation, L-aspartate and 3-sulfino-L-alanine uptake are both inhibited by glisoxepide. Mitochondrial electrogenic aspartate/glutamate antiporter that favors efflux of aspartate and entry of glutamate and proton within the mitochondria as part of the malate-aspartate shuttle. Also mediates the uptake of L-cysteinesulfinate (3-sulfino-L-alanine) by mitochondria in exchange of L-glutamate and proton. Can also exchange L-cysteinesulfinate with aspartate in their anionic form without any proton translocation. Lacks transport activity towards gamma-aminobutyric acid (GABA). This is Electrogenic aspartate/glutamate antiporter SLC25A13, mitochondrial from Rattus norvegicus (Rat).